Consider the following 332-residue polypeptide: Glyoxylate reductase (332 aa).

NADP(+) contacts are provided by residues 155–158 and 236–238; these read MGRI and TSR. Residues Arg238 and Glu267 contribute to the active site. His286 functions as the Proton donor in the catalytic mechanism. NADP(+) is bound at residue 286–288; it reads HAA.

Belongs to the D-isomer specific 2-hydroxyacid dehydrogenase family. GyaR subfamily. Homodimer.

Its subcellular location is the cytoplasm. The enzyme catalyses glycolate + NAD(+) = glyoxylate + NADH + H(+). The chain is Glyoxylate reductase from Korarchaeum cryptofilum (strain OPF8).